A 273-amino-acid chain; its full sequence is 2,3,4,5-tetrahydropyridine-2,6-dicarboxylate N-succinyltransferase (273 aa).

Substrate contacts are provided by R104 and D141.

It belongs to the transferase hexapeptide repeat family. Homotrimer.

Its subcellular location is the cytoplasm. It catalyses the reaction (S)-2,3,4,5-tetrahydrodipicolinate + succinyl-CoA + H2O = (S)-2-succinylamino-6-oxoheptanedioate + CoA. Its pathway is amino-acid biosynthesis; L-lysine biosynthesis via DAP pathway; LL-2,6-diaminopimelate from (S)-tetrahydrodipicolinate (succinylase route): step 1/3. In Acinetobacter baylyi (strain ATCC 33305 / BD413 / ADP1), this protein is 2,3,4,5-tetrahydropyridine-2,6-dicarboxylate N-succinyltransferase.